The sequence spans 291 residues: Probable aquaporin PIP2-4 (291 aa).

N-acetylmethionine is present on Met-1. The disordered stretch occupies residues 1–22 (MAKDLDVNESGPPAARDYKDPP). Ala-2 carries the post-translational modification N-acetylalanine; in Probable aquaporin PIP2-4, N-terminally processed. The Cytoplasmic segment spans residues 2-39 (AKDLDVNESGPPAARDYKDPPPAPFFDMEELRKWPLYR). At Lys-3 the chain carries N6,N6-dimethyllysine. A helical transmembrane segment spans residues 40–60 (AVIAEFVATLLFLYVSILTVI). The Extracellular segment spans residues 61 to 74 (GYKAQTDATAGGVD). A helical transmembrane segment spans residues 75–95 (CGGVGILGIAWAFGGMIFVLV). Over 96–125 (YCTAGISGGHINPAVTVGLFLARKVSLVRT) the chain is Cytoplasmic. An NPA 1 motif is present at residues 107–109 (NPA). The helical transmembrane segment at 126-146 (VLYIVAQCLGAICGCGFVKAF) threads the bilayer. The Extracellular segment spans residues 147-167 (QSSYYTRYGGGANELADGYNK). A helical transmembrane segment spans residues 168-188 (GTGLGAEIIGTFVLVYTVFSA). Over 189-201 (TDPKRNARDSHVP) the chain is Cytoplasmic. A helical membrane pass occupies residues 202–222 (VLAPLPIGFAVFMVHLATIPI). Residues 223-249 (TGTGINPARSFGAAVIYNNEKAWDDQW) are Extracellular-facing. Residues 228-230 (NPA) carry the NPA 2 motif. Residues 250-270 (IFWVGPMIGAAAAAFYHQFIL) form a helical membrane-spanning segment. At 271–291 (RAAAIKALGSFGSFGSFRSFA) the chain is on the cytoplasmic side. Phosphoserine occurs at positions 283, 286, and 289.

This sequence belongs to the MIP/aquaporin (TC 1.A.8) family. PIP (TC 1.A.8.11) subfamily. As to expression, expressed in roots.

It is found in the cell membrane. Functionally, aquaporins facilitate the transport of water and small neutral solutes across cell membranes. The polypeptide is Probable aquaporin PIP2-4 (PIP2-4) (Arabidopsis thaliana (Mouse-ear cress)).